Reading from the N-terminus, the 596-residue chain is Serine/arginine (SR)-type shuttling mRNA binding protein (596 aa).

Residues 1–11 are compositionally biased toward polar residues; it reads MSEVEYNQENT. 2 disordered regions span residues 1–83 and 244–279; these read MSEV…SRKS and DRED…FGPP. Composition is skewed to basic and acidic residues over residues 12–23 and 42–66; these read HYAEVDNFDRDA and SDRR…RSFN. The region spanning 182–246 is the RRM 1 domain; that stretch reads FHRQPSIVYT…RQVFVREDRE (65 aa). Gly residues predominate over residues 259–275; sequence PRGGGRGGLGGSSGRGS. Residues 302-379 form the RRM 2 domain; it reads TQLFIGNLPF…RMLEVRLDKF (78 aa). The tract at residues 458-478 is disordered; sequence GYSTRASGPTSARAPAPPAAP. In terms of domain architecture, RRM 3 spans 480–556; sequence QQIFVKNLPW…RPLDIEFNRR (77 aa). The span at 563 to 572 shows a compositional bias: gly residues; sequence GGGSVNGGND. Positions 563–596 are disordered; sequence GGGSVNGGNDGNAPMVEVSAQDDEDGDAPVPMQG.

The protein resides in the nucleus. In terms of biological role, binds to intron-containing transcripts and is involved in quality control for the export of spliced mRNAs from the nucleus. Binds to pre-mRNAs until splicing is completed or until faulty mRNAs are degraded. The polypeptide is Serine/arginine (SR)-type shuttling mRNA binding protein (Mycosarcoma maydis (Corn smut fungus)).